The following is a 689-amino-acid chain: Elongation factor G (689 aa).

The tr-type G domain occupies 8–282 (ERTRNIGIMA…AVVDYLPAPT (275 aa)). GTP is bound by residues 17 to 24 (AHIDAGKT), 81 to 85 (DTPGH), and 135 to 138 (NKMD).

It belongs to the TRAFAC class translation factor GTPase superfamily. Classic translation factor GTPase family. EF-G/EF-2 subfamily.

The protein resides in the cytoplasm. In terms of biological role, catalyzes the GTP-dependent ribosomal translocation step during translation elongation. During this step, the ribosome changes from the pre-translocational (PRE) to the post-translocational (POST) state as the newly formed A-site-bound peptidyl-tRNA and P-site-bound deacylated tRNA move to the P and E sites, respectively. Catalyzes the coordinated movement of the two tRNA molecules, the mRNA and conformational changes in the ribosome. The polypeptide is Elongation factor G (Desulforudis audaxviator (strain MP104C)).